We begin with the raw amino-acid sequence, 533 residues long: MDATAFHPSLWGDFFVKYKPPTAPKRGHMTQRAELLKEEVRKTLKAAANQIKNALDLIITLQRLGLDHHYENEISELLRFVYSSSDYDDKDLYVVSLRFYLLRKHGHCVSSDVFTSFKDEEGNFVVDDTKCLLSLYNAAYLRTHGEKVLDEAITFTRRQLEALLLDSLEPALADEVHLTLQTPLFRRLRILEAVNYIPIYGKEAGRNEAILELAKLNFNLAQLIYCEELKEITLWWKQLNVETNLSFIRDRIVECHFWMTGACCEPQYSLSRVIATKMTALITVLDDMMDTYSTTEEAMLLAEAIYRWEESAAELLPGYMKDFYLYLLKTIDSCGDELGPNRSFRTFYLKEMLKVFVRGSSQEIKWRNENYVPKTISEHLEHSGPTVGAFQVACSSFVGMGDNITKESFEWLLTYPELVKSLMNIARLLNDTASTKREQNAGHHVSTVQCYMLKHGTTMDEACDKIKELTEDSWKDMMELYLTPTEHPKLIAQTIVDFARTADYMYKETDGFTFSHTIKDMIAKLFVDPISLF.

Mg(2+) contacts are provided by aspartate 286, aspartate 290, asparagine 430, serine 434, and glutamate 438. The DDXXD motif motif lies at 286–290 (DDMMD).

The protein belongs to the terpene synthase family. It depends on Mg(2+) as a cofactor. Requires Co(2+) as cofactor. Mn(2+) serves as cofactor.

It localises to the cytoplasm. It carries out the reaction (2E,6E)-farnesyl diphosphate = (E)-beta-farnesene + diphosphate. The protein operates within secondary metabolite biosynthesis; terpenoid biosynthesis. In terms of biological role, sesquiterpene cyclase catalyzing the production of sixfold more beta-farnesene than alpha-bergamotene from farnesyl diphosphate. Involved in indirect defense by producing volatile signals attracting natural enemies of herbivores. This chain is (E)-beta-farnesene synthase, found in Zea diploperennis (Diploperennial teosinte).